We begin with the raw amino-acid sequence, 137 residues long: ATP synthase epsilon chain (137 aa).

This sequence belongs to the ATPase epsilon chain family. As to quaternary structure, F-type ATPases have 2 components, CF(1) - the catalytic core - and CF(0) - the membrane proton channel. CF(1) has five subunits: alpha(3), beta(3), gamma(1), delta(1), epsilon(1). CF(0) has three main subunits: a, b and c.

It is found in the cell inner membrane. Functionally, produces ATP from ADP in the presence of a proton gradient across the membrane. The chain is ATP synthase epsilon chain from Yersinia pestis bv. Antiqua (strain Antiqua).